A 387-amino-acid chain; its full sequence is Transcription termination/antitermination protein NusA (387 aa).

The S1 motif domain maps to Gly-145–Arg-209. Positions Ala-312–Phe-379 constitute a KH domain.

The protein belongs to the NusA family. As to quaternary structure, monomer. Binds directly to the core enzyme of the DNA-dependent RNA polymerase and to nascent RNA.

It localises to the cytoplasm. Its function is as follows. Participates in both transcription termination and antitermination. This chain is Transcription termination/antitermination protein NusA, found in Thermus thermophilus (strain ATCC 27634 / DSM 579 / HB8).